Consider the following 327-residue polypeptide: Phenylalanine--tRNA ligase alpha subunit (327 aa).

E252 provides a ligand contact to Mg(2+).

It belongs to the class-II aminoacyl-tRNA synthetase family. Phe-tRNA synthetase alpha subunit type 1 subfamily. In terms of assembly, tetramer of two alpha and two beta subunits. Mg(2+) serves as cofactor.

Its subcellular location is the cytoplasm. It carries out the reaction tRNA(Phe) + L-phenylalanine + ATP = L-phenylalanyl-tRNA(Phe) + AMP + diphosphate + H(+). The polypeptide is Phenylalanine--tRNA ligase alpha subunit (Yersinia pestis bv. Antiqua (strain Antiqua)).